The chain runs to 224 residues: uncharacterized protein (224 aa).

The signal sequence occupies residues 1 to 30; that stretch reads MSRSSSSMATVLVVLMVVSAGGLSPPCAAA. Asn141 is a glycosylation site (N-linked (GlcNAc...) asparagine).

It localises to the secreted. This is an uncharacterized protein from Oryza sativa subsp. japonica (Rice).